A 743-amino-acid chain; its full sequence is Phosphoribosylformylglycinamidine synthase subunit PurL (743 aa).

Residue histidine 50 is part of the active site. 2 residues coordinate ATP: tyrosine 53 and lysine 92. Glutamate 94 is a binding site for Mg(2+). Substrate contacts are provided by residues 95 to 98 and arginine 117; that span reads SHNH. The Proton acceptor role is filled by histidine 96. Aspartate 118 is a binding site for Mg(2+). Glutamine 241 provides a ligand contact to substrate. Aspartate 269 provides a ligand contact to Mg(2+). Substrate is bound at residue 313–315; that stretch reads ESQ. Residues aspartate 494 and glycine 531 each coordinate ATP. Asparagine 532 is a binding site for Mg(2+). Serine 534 lines the substrate pocket.

It belongs to the FGAMS family. In terms of assembly, monomer. Part of the FGAM synthase complex composed of 1 PurL, 1 PurQ and 2 PurS subunits.

It is found in the cytoplasm. The enzyme catalyses N(2)-formyl-N(1)-(5-phospho-beta-D-ribosyl)glycinamide + L-glutamine + ATP + H2O = 2-formamido-N(1)-(5-O-phospho-beta-D-ribosyl)acetamidine + L-glutamate + ADP + phosphate + H(+). It functions in the pathway purine metabolism; IMP biosynthesis via de novo pathway; 5-amino-1-(5-phospho-D-ribosyl)imidazole from N(2)-formyl-N(1)-(5-phospho-D-ribosyl)glycinamide: step 1/2. In terms of biological role, part of the phosphoribosylformylglycinamidine synthase complex involved in the purines biosynthetic pathway. Catalyzes the ATP-dependent conversion of formylglycinamide ribonucleotide (FGAR) and glutamine to yield formylglycinamidine ribonucleotide (FGAM) and glutamate. The FGAM synthase complex is composed of three subunits. PurQ produces an ammonia molecule by converting glutamine to glutamate. PurL transfers the ammonia molecule to FGAR to form FGAM in an ATP-dependent manner. PurS interacts with PurQ and PurL and is thought to assist in the transfer of the ammonia molecule from PurQ to PurL. This Mesorhizobium japonicum (strain LMG 29417 / CECT 9101 / MAFF 303099) (Mesorhizobium loti (strain MAFF 303099)) protein is Phosphoribosylformylglycinamidine synthase subunit PurL.